The chain runs to 943 residues: Isoleucine--tRNA ligase (943 aa).

A 'HIGH' region motif is present at residues P58 to H68. E567 provides a ligand contact to L-isoleucyl-5'-AMP. The 'KMSKS' region signature appears at K608–S612. K611 lines the ATP pocket. Residues C906, C909, C926, and C929 each contribute to the Zn(2+) site.

Belongs to the class-I aminoacyl-tRNA synthetase family. IleS type 1 subfamily. As to quaternary structure, monomer. Zn(2+) is required as a cofactor.

The protein localises to the cytoplasm. It carries out the reaction tRNA(Ile) + L-isoleucine + ATP = L-isoleucyl-tRNA(Ile) + AMP + diphosphate. In terms of biological role, catalyzes the attachment of isoleucine to tRNA(Ile). As IleRS can inadvertently accommodate and process structurally similar amino acids such as valine, to avoid such errors it has two additional distinct tRNA(Ile)-dependent editing activities. One activity is designated as 'pretransfer' editing and involves the hydrolysis of activated Val-AMP. The other activity is designated 'posttransfer' editing and involves deacylation of mischarged Val-tRNA(Ile). This chain is Isoleucine--tRNA ligase, found in Pseudomonas fluorescens (strain SBW25).